Reading from the N-terminus, the 490-residue chain is MSAIFEILDKDAGGRIGKLRTPHGIVETPTVMPVINPNIQLISPKEMKSFGAEILITNSYIIYRKEELRTVALEKGLHGLLGFDGPIMTDSGSFQLSVYGSVEVTNEEILGFQQKIGSDIIVPLDIPTPPDVHFRRAEEELAVTAERLEAARKFIQGEQLLAGPVQGSTYPELREKAASRLRDLNFEVYPLGAVVPLMEAYRYAELVDVIAASKKGLSPTSPVHLFGAGHPMMFALAVSLGCDLFDSAAYALYAKDGRYITANGTYHLEKLNYLPCSCPVCSKYTADELRKAKNKEELLGKHNLYATFAEIRLIKQSIKDGKLLELVEQRCRAHPKLLDGLKRLYTHSAWLEQFDPATKGTYFYCGPESSFRPEVLRFEKRLDRFSLEGSAIIRTAPVKGEKDYDRVLTFKAPFGSFPAEMEEVYPFNAEVPKFPDYETLSTALSNTLKLMELNPGAEFTFICEKEFEHPLIEEIGKKAKLVYRAAWKKE.

The active-site Nucleophile is D90. The substrate site is built by D125 and A193. The Zn(2+) site is built by C276, C278, and C281.

The protein belongs to the archaeosine tRNA-ribosyltransferase family. It depends on Zn(2+) as a cofactor.

It carries out the reaction guanosine(15) in tRNA + 7-cyano-7-deazaguanine = 7-cyano-7-carbaguanosine(15) in tRNA + guanine. Its pathway is tRNA modification; archaeosine-tRNA biosynthesis. Functionally, exchanges the guanine residue with 7-cyano-7-deazaguanine (preQ0) at position 15 in the dihydrouridine loop (D-loop) of archaeal tRNAs. The polypeptide is tRNA-guanine(15) transglycosylase (Methanosarcina acetivorans (strain ATCC 35395 / DSM 2834 / JCM 12185 / C2A)).